An 85-amino-acid polypeptide reads, in one-letter code: Small ribosomal subunit protein bS18 (85 aa).

It belongs to the bacterial ribosomal protein bS18 family. In terms of assembly, part of the 30S ribosomal subunit. Forms a tight heterodimer with protein bS6.

Its function is as follows. Binds as a heterodimer with protein bS6 to the central domain of the 16S rRNA, where it helps stabilize the platform of the 30S subunit. The chain is Small ribosomal subunit protein bS18 from Hamiltonella defensa subsp. Acyrthosiphon pisum (strain 5AT).